We begin with the raw amino-acid sequence, 216 residues long: Ephrin-A1 (216 aa).

Positions 1 to 28 are cleaved as a signal peptide; it reads MMELYRAAVQLIVGVGLGVGLWLREAQG. An Ephrin RBD domain is found at 29–161; the sequence is ERHIVFWNSS…RLRVHVSGRT (133 aa). Residue asparagine 36 is glycosylated (N-linked (GlcNAc...) asparagine). A disulfide bridge links cysteine 61 with cysteine 102. Residues 162–181 are disordered; the sequence is TPPPVNVHTPRSHIQSDEPE. Residue serine 195 is the site of GPI-anchor amidated serine attachment. The propeptide at 196 to 216 is removed in mature form; that stretch reads AAPGTPCTLYGLLLAALLLRL.

The protein belongs to the ephrin family. In terms of assembly, binds to the receptor tyrosine kinases EPHA2, EPHA4, EPHA5, EPHA6 and EPHA7. Also binds with low affinity to EPHA1.

Its subcellular location is the membrane. In terms of biological role, cell surface GPI-bound ligand for Eph receptors, a family of receptor tyrosine kinases which are crucial for migration, repulsion and adhesion during neuronal, vascular and epithelial development. Binds promiscuously Eph receptors residing on adjacent cells, leading to contact-dependent bidirectional signaling into neighboring cells. This Xenopus laevis (African clawed frog) protein is Ephrin-A1 (efna1).